A 504-amino-acid chain; its full sequence is Maturase K (504 aa).

It belongs to the intron maturase 2 family. MatK subfamily.

Its subcellular location is the plastid. The protein localises to the chloroplast. Its function is as follows. Usually encoded in the trnK tRNA gene intron. Probably assists in splicing its own and other chloroplast group II introns. In Pachira aquatica (Guiana chestnut), this protein is Maturase K.